Reading from the N-terminus, the 857-residue chain is DNA mismatch repair protein MutS (857 aa).

608–615 (GPNMSGKS) is an ATP binding site.

It belongs to the DNA mismatch repair MutS family.

This protein is involved in the repair of mismatches in DNA. It is possible that it carries out the mismatch recognition step. This protein has a weak ATPase activity. The protein is DNA mismatch repair protein MutS of Lactobacillus gasseri (strain ATCC 33323 / DSM 20243 / BCRC 14619 / CIP 102991 / JCM 1131 / KCTC 3163 / NCIMB 11718 / NCTC 13722 / AM63).